The sequence spans 856 residues: MNIPDKPSLEGLEEKWSKLWKSSKIYNFELEQVSAKQDVYSIDTPPPTASGVLHIGHVFSYTHTDIIARFQRMQGKIVFYPMGWDDNGLPTERRVQNYFSVRCDPSLPYCQNLKLAQINNDSMARSISRRNFIELCQQLSEEDERKFEELWNYLGLSVDWSQTYRTIDDDAIHLSQHFFLENVNSGAAYQDWAPTLWDVTYRTAVAQAEIEERQITGFYYRLAFENENATVEIETTRPELLAGCVALVAHPDDNRYKHLFGSHVITPVFDVKVPVLPHRAAQPDKGSGIAMVCTFGDITDVQWWRDLNLQSCPIIDASGRVVPDAPDPIVSERGRRAFATLSGKTLSAAKKHTLEMLISEKSIIGEPRKITHPVKFFEKGDKPLEILLTRQWYIRNGYSDNALTERLIELGKQLQWYPKTMLRRYEGWLTGLNSDWLISRQRFLGVPFPIWYQTDDRGNAKFDDPIFPDRKDLPLDPTIAVPRGYSENQRGAPNGFVAETDVMDTWATSSLTPQLAGKYLKNPKLFEAIFPYSLRPQGQDIIRTWLFSSIIRSEYAHATAPWKSTAISGFILDPDRKKMSKSKGNAKTPKDILDRYGADAVRYWAACARLGVDTALDVENPTQIKIGRRLALKVLNAARFVVHLHKNKETYSGQPDMKRCYPIDFAAISNPLDLSLLKQLDQTIEQSTNALKNFDHSKALDTTETFFWNFCDNYVEIVKDRAYAGDESALTTLLVVTNIVIKLLAPFIPYATEEAWSWFNETSVHTQSWPETLKLHSGDIELLKIACSFMSLVRGGKTEAKLSQKTEIAYLKIALPNPEIIMPIMDDLRRAGKIDKCELIDGDAQILAIEYGEISR.

A 'HIGH' region motif is present at residues 47–57 (PTASGVLHIGH). The short motif at 578–582 (KMSKS) is the 'KMSKS' region element. Position 581 (K581) interacts with ATP.

This sequence belongs to the class-I aminoacyl-tRNA synthetase family. ValS type 2 subfamily. Monomer.

The protein localises to the cytoplasm. The catalysed reaction is tRNA(Val) + L-valine + ATP = L-valyl-tRNA(Val) + AMP + diphosphate. In terms of biological role, catalyzes the attachment of valine to tRNA(Val). As ValRS can inadvertently accommodate and process structurally similar amino acids such as threonine, to avoid such errors, it has a 'posttransfer' editing activity that hydrolyzes mischarged Thr-tRNA(Val) in a tRNA-dependent manner. In Tropheryma whipplei (strain Twist) (Whipple's bacillus), this protein is Valine--tRNA ligase.